Consider the following 456-residue polypeptide: Ammonium transporter Amt2 (456 aa).

11 helical membrane-spanning segments follow: residues 18-38 (LVWVLTVTFLIFFMHAGFAML), 61-81 (IGVIVFFLLGAAVSAIVAGLT), 109-129 (WLFGAVFAMTAATIVSGAVAG), 141-161 (ILIAGVIYPVVVGVTWAGGFL), 170-190 (AGGMIVHGMGGIAGLTAAWII), 211-231 (ITFAVLGTLILAFGWYGFNVG), 255-275 (VALVTTLGMAAGALGAGGVAF), 281-301 (VDTLYVANGVLAGLVGITAIA), 304-324 (IVWPGALVVGLLAGAQLPIVF), 339-359 (VFPVHGSAGVLGTLLYPVFAV), and 377-397 (VGVGVIAVWTFVATTAIFGGF).

The protein belongs to the ammonia transporter channel (TC 1.A.11.2) family. Homotrimer. Interacts with both GlnK1 and GlnK2 after ammonium shock.

It localises to the cell membrane. Its function is as follows. Involved in the uptake of ammonium/ammonia (NH(4)(+)/NH(3)). Transport is electrogenic. This chain is Ammonium transporter Amt2, found in Haloferax mediterranei (strain ATCC 33500 / DSM 1411 / JCM 8866 / NBRC 14739 / NCIMB 2177 / R-4) (Halobacterium mediterranei).